The following is a 406-amino-acid chain: Kelch domain-containing protein 2 (406 aa).

Kelch repeat units lie at residues Glu-31–Gly-85, Ser-92–Asp-136, Leu-148–Gln-207, His-221–Ile-259, His-271–Asn-311, and His-322–Val-359.

In terms of assembly, component of a CRL2(KLHDC2) E3 ubiquitin-protein ligase complex, also named ECS(KLHDC2) complex, composed of CUL2, Elongin BC (ELOB and ELOC), RBX1 and substrate-specific adapter KLHDC2. May form oligomers as a KLHDC2-ELOB-ELOC complex; this interaction is autoinhibitory for the E3 ligase complex as the substrate-binding site of KLHDC2 is blocked in the oligomer. Interacts with CREB3; interaction is direct and specific as it does not interact with CREB1, ATF4, ATF6, JUN, FOS, CEBPA or herpes simplex virus transactivator VP16. Post-translationally, autoubiquitinated by the CRL2(KLHDC2) E3 ligase complex.

The protein localises to the nucleus. It participates in protein modification; protein ubiquitination. Substrate-recognition component of a Cul2-RING (CRL2) E3 ubiquitin-protein ligase complex of the DesCEND (destruction via C-end degrons) pathway, which recognizes a C-degron located at the extreme C terminus of target proteins, leading to their ubiquitination and degradation. The C-degron recognized by the DesCEND pathway is usually a motif of less than ten residues and can be present in full-length proteins, truncated proteins or proteolytically cleaved forms. The CRL2(KLHDC2) complex specifically recognizes proteins with a diglycine (Gly-Gly) at the C-terminus, leading to their ubiquitination and degradation. The CRL2(KLHDC2) complex mediates ubiquitination and degradation of truncated SELENOK and SELENOS selenoproteins produced by failed UGA/Sec decoding, which end with a diglycine. The CRL2(KLHDC2) complex also recognizes proteolytically cleaved proteins ending with Gly-Gly, such as the N-terminal fragment of USP1, leading to their degradation. May also act as an indirect repressor of CREB3-mediated transcription by interfering with CREB3-DNA-binding. The protein is Kelch domain-containing protein 2 of Mus musculus (Mouse).